We begin with the raw amino-acid sequence, 398 residues long: S-adenosylmethionine synthase (398 aa).

ATP is bound at residue histidine 16. Residue aspartate 18 coordinates Mg(2+). Glutamate 51 is a K(+) binding site. Residues glutamate 64 and glutamine 108 each coordinate L-methionine. The interval 108–118 (QSADIAQGVDA) is flexible loop. Residues 176–178 (DSK), 242–243 (KF), aspartate 251, 257–258 (RK), alanine 274, and lysine 278 each bind ATP. Aspartate 251 provides a ligand contact to L-methionine. Lysine 282 serves as a coordination point for L-methionine.

Belongs to the AdoMet synthase family. Homotetramer; dimer of dimers. Requires Mg(2+) as cofactor. It depends on K(+) as a cofactor.

The protein localises to the cytoplasm. The enzyme catalyses L-methionine + ATP + H2O = S-adenosyl-L-methionine + phosphate + diphosphate. Its pathway is amino-acid biosynthesis; S-adenosyl-L-methionine biosynthesis; S-adenosyl-L-methionine from L-methionine: step 1/1. Functionally, catalyzes the formation of S-adenosylmethionine (AdoMet) from methionine and ATP. The overall synthetic reaction is composed of two sequential steps, AdoMet formation and the subsequent tripolyphosphate hydrolysis which occurs prior to release of AdoMet from the enzyme. In Rhodopseudomonas palustris (strain BisB5), this protein is S-adenosylmethionine synthase.